The chain runs to 434 residues: Glutamate-1-semialdehyde 2,1-aminomutase (434 aa).

Lys270 carries the N6-(pyridoxal phosphate)lysine modification.

Belongs to the class-III pyridoxal-phosphate-dependent aminotransferase family. HemL subfamily. As to quaternary structure, homodimer. Requires pyridoxal 5'-phosphate as cofactor.

The protein localises to the cytoplasm. The enzyme catalyses (S)-4-amino-5-oxopentanoate = 5-aminolevulinate. It participates in porphyrin-containing compound metabolism; protoporphyrin-IX biosynthesis; 5-aminolevulinate from L-glutamyl-tRNA(Glu): step 2/2. This chain is Glutamate-1-semialdehyde 2,1-aminomutase, found in Pelotomaculum thermopropionicum (strain DSM 13744 / JCM 10971 / SI).